We begin with the raw amino-acid sequence, 248 residues long: 3-deoxy-manno-octulosonate cytidylyltransferase (248 aa).

The protein belongs to the KdsB family.

The protein localises to the cytoplasm. The enzyme catalyses 3-deoxy-alpha-D-manno-oct-2-ulosonate + CTP = CMP-3-deoxy-beta-D-manno-octulosonate + diphosphate. Its pathway is nucleotide-sugar biosynthesis; CMP-3-deoxy-D-manno-octulosonate biosynthesis; CMP-3-deoxy-D-manno-octulosonate from 3-deoxy-D-manno-octulosonate and CTP: step 1/1. It participates in bacterial outer membrane biogenesis; lipopolysaccharide biosynthesis. Activates KDO (a required 8-carbon sugar) for incorporation into bacterial lipopolysaccharide in Gram-negative bacteria. The chain is 3-deoxy-manno-octulosonate cytidylyltransferase from Desulfosudis oleivorans (strain DSM 6200 / JCM 39069 / Hxd3) (Desulfococcus oleovorans).